The following is a 250-amino-acid chain: 1-(5-phosphoribosyl)-5-[(5-phosphoribosylamino)methylideneamino] imidazole-4-carboxamide isomerase (250 aa).

The active-site Proton acceptor is Asp-12. Asp-133 functions as the Proton donor in the catalytic mechanism.

The protein belongs to the HisA/HisF family.

The protein resides in the cytoplasm. It catalyses the reaction 1-(5-phospho-beta-D-ribosyl)-5-[(5-phospho-beta-D-ribosylamino)methylideneamino]imidazole-4-carboxamide = 5-[(5-phospho-1-deoxy-D-ribulos-1-ylimino)methylamino]-1-(5-phospho-beta-D-ribosyl)imidazole-4-carboxamide. It functions in the pathway amino-acid biosynthesis; L-histidine biosynthesis; L-histidine from 5-phospho-alpha-D-ribose 1-diphosphate: step 4/9. The protein is 1-(5-phosphoribosyl)-5-[(5-phosphoribosylamino)methylideneamino] imidazole-4-carboxamide isomerase of Zymomonas mobilis subsp. mobilis (strain ATCC 31821 / ZM4 / CP4).